The chain runs to 400 residues: Multidrug resistance protein 2 (400 aa).

11 helical membrane passes run 11 to 31, 46 to 66, 78 to 98, 106 to 126, 142 to 162, 164 to 184, 213 to 233, 253 to 273, 297 to 317, 346 to 366, and 368 to 388; these read IFII…LIIP, TMGY…PFAG, IILG…GTHV, ILGG…VADI, AIST…GFGI, MPFF…VFIL, IHPV…GLSA, IAAI…LLFG, FVST…FIFL, STYT…LFDL, and IHYP…LTMV.

This sequence belongs to the major facilitator superfamily. TCR/Tet family.

Its subcellular location is the cell membrane. Energy-dependent efflux pump responsible for decreased drug accumulation in multi-drug-resistant cells. Probably uses a transmembrane proton gradient as the energy source. Causes the efflux of a variety of toxic substances, including such structurally diverse compounds as ethidium bromide, rhodamine and acridine dyes, tetraphenylphosphonium, puromycin, chloramphenicol, doxorubicin, and fluoroquinolone antibiotics. This Bacillus subtilis (strain 168) protein is Multidrug resistance protein 2 (blt).